A 318-amino-acid chain; its full sequence is Biotin synthase (318 aa).

The Radical SAM core domain maps to 44–273; that stretch reads LCGNKFDLCT…TVQIRLAGGR (230 aa). Residues Cys62, Cys66, and Cys69 each contribute to the [4Fe-4S] cluster site. [2Fe-2S] cluster contacts are provided by Ser106, Cys138, Cys198, and Arg268.

This sequence belongs to the radical SAM superfamily. Biotin synthase family. As to quaternary structure, homodimer. [4Fe-4S] cluster is required as a cofactor. The cofactor is [2Fe-2S] cluster.

The catalysed reaction is (4R,5S)-dethiobiotin + (sulfur carrier)-SH + 2 reduced [2Fe-2S]-[ferredoxin] + 2 S-adenosyl-L-methionine = (sulfur carrier)-H + biotin + 2 5'-deoxyadenosine + 2 L-methionine + 2 oxidized [2Fe-2S]-[ferredoxin]. It functions in the pathway cofactor biosynthesis; biotin biosynthesis; biotin from 7,8-diaminononanoate: step 2/2. Functionally, catalyzes the conversion of dethiobiotin (DTB) to biotin by the insertion of a sulfur atom into dethiobiotin via a radical-based mechanism. The sequence is that of Biotin synthase from Clostridium botulinum (strain Loch Maree / Type A3).